We begin with the raw amino-acid sequence, 1684 residues long: Protein Wiz (1684 aa).

The segment at 1–77 (MEGLLAGGLA…PGLSEALPRA (77 aa)) is disordered. The span at 13–24 (DHPRGPAPREDI) shows a compositional bias: basic and acidic residues. C2H2-type zinc fingers lie at residues 308-330 (FPCI…MSQH), 345-367 (LACS…WQLH), 454-477 (NTCV…RLVH), 734-756 (RKCP…VRGH), and 802-824 (MRCD…ARAH). The disordered stretch occupies residues 854–876 (LPPSPLGREPGGPPRSFLTSRRP). The segment at 903–925 (TTCEVCGACFETRKGLSSHARSH) adopts a C2H2-type 6 zinc-finger fold. Glycyl lysine isopeptide (Lys-Gly) (interchain with G-Cter in SUMO2) cross-links involve residues Lys-916, Lys-972, Lys-988, Lys-1000, and Lys-1021. A disordered region spans residues 1005 to 1072 (FSAKGLTHPS…PLNLTSGPEP (68 aa)). At Ser-1029 the chain carries Phosphoserine. A Phosphothreonine modification is found at Thr-1031. Glycyl lysine isopeptide (Lys-Gly) (interchain with G-Cter in SUMO2) cross-links involve residues Lys-1033 and Lys-1038. 2 positions are modified to phosphoserine: Ser-1039 and Ser-1045. The segment covering 1040 to 1057 (PQLSLSPRPTSPKAQWPQ) has biased composition (polar residues). Thr-1049 carries the post-translational modification Phosphothreonine. A phosphoserine mark is found at Ser-1050 and Ser-1058. The tract at residues 1063–1067 (PLNLT) is interaction with CTBP1 and CTBP2 1. The C2H2-type 7 zinc-finger motif lies at 1076–1098 (IRCEFCGEFFENRKGLSSHARSH). Residue Lys-1089 forms a Glycyl lysine isopeptide (Lys-Gly) (interchain with G-Cter in SUMO2) linkage. Phosphoserine is present on residues Ser-1112 and Ser-1139. A disordered region spans residues 1127 to 1208 (SRPGGHLHPP…GLATPSLPKK (82 aa)). Glycyl lysine isopeptide (Lys-Gly) (interchain with G-Cter in SUMO2) cross-links involve residues Lys-1141 and Lys-1145. A phosphoserine mark is found at Ser-1155, Ser-1160, and Ser-1167. Glycyl lysine isopeptide (Lys-Gly) (interchain with G-Cter in SUMO2) cross-links involve residues Lys-1171 and Lys-1172. 2 positions are modified to phosphoserine: Ser-1179 and Ser-1184. Residue Lys-1195 is modified to N6,N6,N6-trimethyllysine; by EHMT2; alternate. Residue Lys-1195 is modified to N6,N6-dimethyllysine; by EHMT2; alternate. Lys-1210 is covalently cross-linked (Glycyl lysine isopeptide (Lys-Gly) (interchain with G-Cter in SUMO2)). An interaction with CTBP1 and CTBP2 2 region spans residues 1247-1251 (PLNLS). Residues 1260–1282 (IRCEFCGEFFENRKGLSSHARSH) form a C2H2-type 8 zinc finger. A Glycyl lysine isopeptide (Lys-Gly) (interchain with G-Cter in SUMO2) cross-link involves residue Lys-1273. Ser-1296 carries the post-translational modification Phosphoserine. Lys-1315 participates in a covalent cross-link: Glycyl lysine isopeptide (Lys-Gly) (interchain with G-Cter in SUMO2). A disordered region spans residues 1320 to 1384 (AGDLAPALTE…SKPSAASYLG (65 aa)). Low complexity predominate over residues 1335–1351 (AAPGALHSPLPLSPLAS). Ser-1342 and Ser-1347 each carry phosphoserine. Glycyl lysine isopeptide (Lys-Gly) (interchain with G-Cter in SUMO2) cross-links involve residues Lys-1376, Lys-1389, Lys-1403, Lys-1405, and Lys-1415. The C2H2-type 9 zinc-finger motif lies at 1430–1452 (ACCELCGLYFENRKALASHARAH). Glycyl lysine isopeptide (Lys-Gly) (interchain with G-Cter in SUMO2) cross-links involve residues Lys-1481, Lys-1497, and Lys-1510. Disordered regions lie at residues 1496 to 1587 (TKKF…GEEV) and 1592 to 1611 (QKLE…PSLV). Phosphoserine is present on Ser-1550. A Glycyl lysine isopeptide (Lys-Gly) (interchain with G-Cter in SUMO1); alternate cross-link involves residue Lys-1556. A Glycyl lysine isopeptide (Lys-Gly) (interchain with G-Cter in SUMO2); alternate cross-link involves residue Lys-1556. The segment covering 1556–1574 (KSEEHQRQNINKFERRQAR) has biased composition (basic and acidic residues). Glycyl lysine isopeptide (Lys-Gly) (interchain with G-Cter in SUMO2) cross-links involve residues Lys-1567 and Lys-1593. Over residues 1599 to 1611 (QPPPRVRPVPSLV) the composition is skewed to pro residues. Residues 1629–1655 (LKCRFCEVEFQGPLSIQEEWVRHLQRH) form a C2H2-type 10 zinc finger. The tract at residues 1662–1684 (SKADPPPEEPQAPQAQTAAVEAP) is disordered. Residue Lys-1663 forms a Glycyl lysine isopeptide (Lys-Gly) (interchain with G-Cter in SUMO2) linkage. A compositionally biased stretch (low complexity) spans 1672–1684 (QAPQAQTAAVEAP).

This sequence belongs to the krueppel C2H2-type zinc-finger protein family. Part of a complex containing at least CDYL, REST, WIZ, SETB1, EHMT1 and EHMT2. Interacts with EHMT1, EHMT2, CTBP1 and CTBP2. In terms of tissue distribution, according to PubMed:9795207, isoform L and isoform S are brain-specific. According to PubMed:16702210, isoform S is ubiquitously expressed.

It is found in the nucleus. Functionally, may link EHMT1 and EHMT2 histone methyltransferases to the CTBP corepressor machinery. May be involved in EHMT1-EHMT2 heterodimer formation and stabilization. The polypeptide is Protein Wiz (Wiz) (Mus musculus (Mouse)).